Reading from the N-terminus, the 267-residue chain is Zein-alpha Z4 (267 aa).

The first 21 residues, 1 to 21 (MAAKIFCLIMLLGLSASAATA), serve as a signal peptide directing secretion.

It belongs to the zein family.

Functionally, zeins are major seed storage proteins. The sequence is that of Zein-alpha Z4 from Zea mays (Maize).